Reading from the N-terminus, the 410-residue chain is MQSPIHVTSEIGKLKTVMLHRPGKEIENVYPEILHRMLVDDIPYLPIAQEEHDLFAQTLRDNGAEVLYLEDLLTDALADDNIKDEFLEKIIAESGYAAGAIHDGLKEFLLSFSTKDMVNKIIAGVRKDEIKTKYASLAELAEDKDYPFYMDPMPNAYFTRDQQACIGDGITINHMTFKARQRESLFTEYIIKHNKRFADKGVEVWRNRYPEGRIEGGDELVLSDHVLAIGISQRTSAKAITELAESLFEKSDYDTVIAIHIPHNHAMMHLDTVFTMINYDQFTVHPAILRDGGHVDAYIMHPGNNGEISITHETNLKEILKKALDKPEIDLIPTGGGDPIIAPREQWNDGSNTLAIAPGVVVTYDRNYVSNDLLRKHGILVHEVRSSELSRGRGGPRCMSCPIVREDLKK.

Catalysis depends on cysteine 398, which acts as the Amidino-cysteine intermediate.

This sequence belongs to the arginine deiminase family.

The protein localises to the cytoplasm. It catalyses the reaction L-arginine + H2O = L-citrulline + NH4(+). Its pathway is amino-acid degradation; L-arginine degradation via ADI pathway; carbamoyl phosphate from L-arginine: step 1/2. The sequence is that of Arginine deiminase from Limosilactobacillus reuteri (strain DSM 20016) (Lactobacillus reuteri).